The chain runs to 237 residues: Orotidine 5'-phosphate decarboxylase (237 aa).

Substrate contacts are provided by residues aspartate 11, lysine 34, aspartate 61–threonine 70, threonine 124, arginine 186, glutamine 195, glycine 215, and arginine 216. The active-site Proton donor is lysine 63.

It belongs to the OMP decarboxylase family. Type 1 subfamily. In terms of assembly, homodimer.

It carries out the reaction orotidine 5'-phosphate + H(+) = UMP + CO2. Its pathway is pyrimidine metabolism; UMP biosynthesis via de novo pathway; UMP from orotate: step 2/2. In terms of biological role, catalyzes the decarboxylation of orotidine 5'-monophosphate (OMP) to uridine 5'-monophosphate (UMP). The protein is Orotidine 5'-phosphate decarboxylase of Lactococcus lactis subsp. lactis (strain IL1403) (Streptococcus lactis).